Here is a 444-residue protein sequence, read N- to C-terminus: Type VI secretion system baseplate component TssK1 (444 aa).

As to quaternary structure, forms transient higher-order structures that correlated with dynamics of sheath component TssB1. Interacts with TssA1.

Functionally, core component of the H1 type VI (H1-T6SS) secretion system that plays a role in the release of toxins targeting both eukaryotic and prokaryotic species. Functions as a spatio-temporal marker for assembly of contractile apparatus made of TssB1 and TssC1. This role in assembly depends on TssM1. The chain is Type VI secretion system baseplate component TssK1 from Pseudomonas aeruginosa (strain ATCC 15692 / DSM 22644 / CIP 104116 / JCM 14847 / LMG 12228 / 1C / PRS 101 / PAO1).